A 44-amino-acid polypeptide reads, in one-letter code: Protein PsbN (44 aa).

A helical transmembrane segment spans residues 6–26 (FFFTIFLWCLLLSITGYSIYV).

It belongs to the PsbN family.

The protein localises to the plastid. It localises to the chloroplast thylakoid membrane. In terms of biological role, may play a role in photosystem I and II biogenesis. This is Protein PsbN from Chlorella vulgaris (Green alga).